Consider the following 202-residue polypeptide: MKLLHIDSSILGDSSASRHVSAAAVAQFRKKDPSVEVISLDLASDPLPHLDVEALSWLGKDLTPDVSGRPELIAGANALKDFKAADIVVIGVPMYNLSIPSQLKAWIDRIMVAGQTFRYTSGGGIEGLAKGKKVVLAVARGGLYGEGSPAASFEHQLSYLKSVFAMIGITDLTVIEAEGLATNGGADRARILSDAEQKASAL.

FMN contacts are provided by residues serine 9, 15–17 (SAS), and 94–97 (MYNL).

This sequence belongs to the azoreductase type 1 family. In terms of assembly, homodimer. FMN serves as cofactor.

It carries out the reaction 2 a quinone + NADH + H(+) = 2 a 1,4-benzosemiquinone + NAD(+). It catalyses the reaction N,N-dimethyl-1,4-phenylenediamine + anthranilate + 2 NAD(+) = 2-(4-dimethylaminophenyl)diazenylbenzoate + 2 NADH + 2 H(+). In terms of biological role, quinone reductase that provides resistance to thiol-specific stress caused by electrophilic quinones. Functionally, also exhibits azoreductase activity. Catalyzes the reductive cleavage of the azo bond in aromatic azo compounds to the corresponding amines. The protein is FMN-dependent NADH:quinone oxidoreductase of Gluconobacter oxydans (strain 621H) (Gluconobacter suboxydans).